The following is a 302-amino-acid chain: HPr kinase/phosphorylase (302 aa).

Residues His-136 and Lys-157 contribute to the active site. 151 to 158 (GESGIGKS) provides a ligand contact to ATP. Ser-158 contributes to the Mg(2+) binding site. Asp-175 acts as the Proton acceptor; for phosphorylation activity. Proton donor; for dephosphorylation activity in catalysis. An important for the catalytic mechanism of both phosphorylation and dephosphorylation region spans residues 198–207 (LEVRGLGIID). Glu-199 contacts Mg(2+). Arg-240 is an active-site residue. Residues 261 to 266 (PIRPGR) form an important for the catalytic mechanism of dephosphorylation region.

This sequence belongs to the HPrK/P family. In terms of assembly, homohexamer. Mg(2+) serves as cofactor.

The enzyme catalyses [HPr protein]-L-serine + ATP = [HPr protein]-O-phospho-L-serine + ADP + H(+). It catalyses the reaction [HPr protein]-O-phospho-L-serine + phosphate + H(+) = [HPr protein]-L-serine + diphosphate. Catalyzes the ATP- as well as the pyrophosphate-dependent phosphorylation of a specific serine residue in HPr, a phosphocarrier protein of the phosphoenolpyruvate-dependent sugar phosphotransferase system (PTS). HprK/P also catalyzes the pyrophosphate-producing, inorganic phosphate-dependent dephosphorylation (phosphorolysis) of seryl-phosphorylated HPr (P-Ser-HPr). The two antagonistic activities of HprK/P are regulated by several intracellular metabolites, which change their concentration in response to the absence or presence of rapidly metabolisable carbon sources (glucose, fructose, etc.) in the growth medium. Therefore, by controlling the phosphorylation state of HPr, HPrK/P is a sensor enzyme that plays a major role in the regulation of carbon metabolism and sugar transport: it mediates carbon catabolite repression (CCR), and regulates PTS-catalyzed carbohydrate uptake and inducer exclusion. The chain is HPr kinase/phosphorylase from Clostridium beijerinckii (strain ATCC 51743 / NCIMB 8052) (Clostridium acetobutylicum).